We begin with the raw amino-acid sequence, 1337 residues long: Partitioning defective 3 homolog (1337 aa).

The residue at position 25 (Ser-25) is a Phosphoserine. Disordered stretches follow at residues 81-109 and 143-263; these read EQDPHHGGDGTSASSTGTQSPEIFGSELG and SSDP…LENM. Thr-91 carries the post-translational modification Phosphothreonine. A compositionally biased stretch (low complexity) spans 91–100; it reads TSASSTGTQS. Composition is skewed to polar residues over residues 150–163 and 171–188; these read GLSTSVSDNNFSSE and TRWSTTAGFLKQNTTGSP. Ser-156 and Ser-174 each carry phosphoserine. Basic and acidic residues predominate over residues 190-203; that stretch reads TCDRKKDENYRSLP. Residues 207 to 224 show a composition bias toward polar residues; the sequence is SSWSNQFQRDNARSSLSA. Residues 271–359 form the PDZ 1 domain; sequence MVKLVQVPND…ARVIWFHVVP (89 aa). Ser-383 is modified (phosphoserine). A disordered region spans residues 397-441; that stretch reads NAPQALPRAPRLSQPPEQLDAHPRLPHSAHASTKPPTAPALAPPN. 2 PDZ domains span residues 461–546 and 590–677; these read NIQL…LVFR and EVPL…GMIQ. Phosphotyrosine is present on Tyr-489. Residues Ser-692, Ser-695, Ser-715, Ser-728, Ser-809, and Ser-827 each carry the phosphoserine modification. Residues 712 to 936 form an interaction with PRKCI and PRKCZ region; that stretch reads RRISHSLYSG…AAIDKSYDKP (225 aa). Lys-834 bears the N6-acetyllysine mark. At Ser-837 the chain carries Phosphoserine. N6-acetyllysine is present on Lys-851. Residues Ser-852 and Ser-873 each carry the phosphoserine modification. Disordered regions lie at residues 866–888, 932–1015, 1028–1055, 1110–1271, and 1284–1337; these read VDDQRAGSPNRDVGPSLGLKKSS, SYDK…AKKG, KHRKDDKMEKMGRIKIQDSFTSEEDRVR, LNAR…LGGH, and LLRQ…PFYS. Residue Lys-885 is modified to N6-acetyllysine. Residues 935 to 1337 form an interaction with FRMD4A region; it reads KPMVDDDDEG…TPEKGRPFYS (403 aa). A compositionally biased stretch (acidic residues) spans 939–953; the sequence is DDDDEGMETLEEDTE. A Phosphoserine; by AURKA modification is found at Ser-962. Residues Ser-971 and Ser-973 each carry the phosphoserine modification. Basic and acidic residues-rich tracts occupy residues 981–1009 and 1030–1043; these read DPEKRDKAEKKKDKAGKDKKKDREKEKDK and RKDDKMEKMGRIKI. Ser-1046 carries the post-translational modification Phosphoserine. Residues 1050–1082 adopt a coiled-coil conformation; sequence EEDRVRMKEEQERIQAKTREFRERQARERDYAE. Residues 1138-1147 show a composition bias toward polar residues; sequence PGDSNRSTPS. Over residues 1148 to 1175 the composition is skewed to basic and acidic residues; it reads NHDRIQRLRQEFQQAKQDEDVEDRRRTY. Coiled-coil stretches lie at residues 1149–1172, 1199–1222, and 1278–1299; these read HDRIQRLRQEFQQAKQDEDVEDRR, VQVQRQRQEERESFQQAQRQYSSL, and MLETQELLRQEQRRKEQQLKKQ. Positions 1180 to 1203 are enriched in low complexity; sequence SWSSSRPASQSGRHSVSVEVQVQR. Residues 1219–1240 show a composition bias toward polar residues; the sequence is YSSLPRQSRKNASSVSQDSWEQ. Over residues 1284-1296 the composition is skewed to basic and acidic residues; that stretch reads LLRQEQRRKEQQL. A compositionally biased stretch (polar residues) spans 1318-1327; the sequence is SQVARLNRLQ. The segment covering 1328 to 1337 has biased composition (basic and acidic residues); sequence TPEKGRPFYS. Lys-1331 carries the N6-acetyllysine modification.

It belongs to the PAR3 family. As to quaternary structure, component of a complex whose core is composed of ARHGAP17, AMOT, PALS1, PATJ and PARD3/PAR3. Interacts (via PDZ 1 domain) with PARD6A, PARD6B and F11R/JAM1. Interacts with AURKA, AURKB and SIRT2. Interacts with PRKCI. Interacts with PRKCZ. Part of a complex with PARD6A or PARD6B, PRKCI or PRKCZ and CDC42 or RAC1. Interacts with LIMK2 and CDH5. Component of the Par polarity complex, composed of at least phosphorylated PRKCZ, PARD3 and TIAM1. Directly interacts with TIAM1 and TIAM2. Interacts with ECT2 and FBF1. Interacts (via PDZ 3 domain) with PTEN (via C-terminus). Interacts (via coiled-coil domain) with FRMD4A. Found in a complex with PARD3, CYTH1 and FRMD4A. Interacts with SAPCD2. Interacts with PRKCA. In terms of assembly, interacts with PRKCZ. In terms of processing, acetylated. Deacetylated by SIRT2, thereby inhibiting Schwann cell peripheral myelination. Post-translationally, phosphorylation at Ser-827 by PRKCZ and PRKCI occurs at the most apical tip of epithelial cell-cell contacts during the initial phase of tight junction formation and may promote dissociation of the complex with PARD6. EGF-induced Tyr-1127 phosphorylation mediates dissociation from LIMK2. Phosphorylation by AURKA at Ser-962 is required for the normal establishment of neuronal polarity. Isoform 1 is predominantly expressed in lung, glandular stomach, prostate, ovary and uterus. Isoform 1 is also expressed in brain, with a high expression in the cortex, hippocampus and in the striatum. Isoform 2 is predominantly expressed in intestinal epithelial cells, kidney and prostate.

Its subcellular location is the cytoplasm. It is found in the endomembrane system. The protein resides in the cell junction. It localises to the tight junction. The protein localises to the adherens junction. Its subcellular location is the cell cortex. It is found in the cytoskeleton. The protein resides in the cell membrane. Adapter protein involved in asymmetrical cell division and cell polarization processes. Seems to play a central role in the formation of epithelial tight junctions. Association with PARD6B may prevent the interaction of PARD3 with F11R/JAM1, thereby preventing tight junction assembly. The PARD6-PARD3 complex links GTP-bound Rho small GTPases to atypical protein kinase C proteins. Required for establishment of neuronal polarity and normal axon formation in cultured hippocampal neurons. Involved in Schwann cell peripheral myelination. Targets the phosphatase PTEN to cell junctions. In Rattus norvegicus (Rat), this protein is Partitioning defective 3 homolog (Pard3).